Here is a 773-residue protein sequence, read N- to C-terminus: MAAESALQVVEKLQARLAANPDPKKLLKYLKKLSVLPITVDILVETGVGKTVNSFRKHEQVGNFARDLVAQWKKLVPVERNNEAEDQDFEKSNSRKRPRDVPQQEEEAEGNYQESWQASGSQPYSPEHRQKKHRKLPELERPHKVAHGHERRDERKRCHKVSPPYSSDPESSDYGHVQSPPPSSPHQMYTDLSRSPEMDQEPIVSHPKPGKVHSNTFQDRLGVSHLGEHQGKGAVSQNKPHKSSHKEKRPVDARGDEKSSVMGREKSHKASSKEESRRLLSEDSAKEKLPSSVVKKEKDREGNSLKKKLSPALDVASDNHFKKPKHKDSEKIKSDKNKQSVDSVDSGRGTGDPLPRAKDKVPNNLKAQEGKVRTNSDRKSPGSLPKVEEMDMDDEFEQPTMSFESYLSYDQPRKKKKKVVKTSGTALGEKGLKKKDSKSTSKNLNSAQKLPKANENKSDKLQPAGAEPTRPRKVPTDVLPALPDIPLPAIQTNYRPLPSLELISSFQPKRKAFSSPQEEEEAGFTGRRMNSKMQVYSGSKCAYLPKMMTLHQQCIRVLKNNIDSIFEVGGVPYSVLEPVLERCTPDQLYRIEECNHVLIEETDQLWKVHCHRDFKEERPEEYESWREMYLRLQDAREQRLRLLTNNIRSAHANKPKGRQAKMAFVNSVAKPPRDVRRRQEKFGTGGAAVPEKVRIKPAPYTTGSSHVPASNSSSSFHSSPEELAYEGPSTSSAHLAPVASSSVSYDPRKPAVKKIAPMMAKTIKAFKNRFSRR.

One can recognise a TFIIS N-terminal domain in the interval Glu-4–Glu-79. The span at Glu-79–Asn-93 shows a compositional bias: basic and acidic residues. The interval Glu-79–Pro-480 is disordered. Residues Tyr-112–Tyr-124 are compositionally biased toward polar residues. The segment covering Leu-136–Lys-156 has biased composition (basic and acidic residues). The span at Ser-162 to Tyr-174 shows a compositional bias: low complexity. Ser-195 carries the post-translational modification Phosphoserine. Positions Lys-239–Lys-248 are enriched in basic residues. Composition is skewed to basic and acidic residues over residues Arg-249–Glu-265 and Ser-271–Ser-304. Residue Ser-310 is modified to Phosphoserine. Basic and acidic residues-rich tracts occupy residues Ser-317 to Gln-339 and Gln-368 to Ser-380. Residues Ser-380 and Ser-383 each carry the phosphoserine modification. Position 430 is an N6-acetyllysine (Lys-430). The residue at position 515 (Ser-515) is a Phosphoserine. An activation domain region spans residues Glu-521 to Glu-680. The interval Thr-549–Leu-558 is BC-box. In terms of domain architecture, F-box spans Ile-565–His-609. A disordered region spans residues Pro-671–Pro-747. The segment covering Ser-704–Ser-718 has biased composition (low complexity). The segment covering Pro-728–Ser-744 has biased composition (polar residues).

Heterotrimer of an A (ELOA, ELOA2 or ELOA3P), ELOB and ELOC subunit. Part of a multisubunit ubiquitin ligase complex consisting of elongin BC complex (ELOB and ELOC), elongin A/ELOA, RBX1 and CUL5. Interacts with ERCC6; the interaction is induced by DNA damaging agents or inhibitors of RNA polymerase II elongation. Interacts (via BC-box) with CUL5.

It is found in the nucleus. Its function is as follows. SIII, also known as elongin, is a general transcription elongation factor that increases the RNA polymerase II transcription elongation past template-encoded arresting sites. Subunit A is transcriptionally active and its transcription activity is strongly enhanced by binding to the dimeric complex of the SIII regulatory subunits B and C (elongin BC complex). Functionally, as part of a multisubunit complex composed of elongin BC complex (ELOB and ELOC), elongin A/ELOA, RBX1 and CUL5; polyubiquitinates monoubiquitinated POLR2A. This Rattus norvegicus (Rat) protein is Elongin-A (Eloa).